We begin with the raw amino-acid sequence, 302 residues long: Sulfate adenylyltransferase subunit 2 (302 aa).

The segment at 280-302 is disordered; it reads RQGRAIDHDQSGSMELKKRQGYF.

The protein belongs to the PAPS reductase family. CysD subfamily. Heterodimer composed of CysD, the smaller subunit, and CysN.

The catalysed reaction is sulfate + ATP + H(+) = adenosine 5'-phosphosulfate + diphosphate. It participates in sulfur metabolism; hydrogen sulfide biosynthesis; sulfite from sulfate: step 1/3. Functionally, with CysN forms the ATP sulfurylase (ATPS) that catalyzes the adenylation of sulfate producing adenosine 5'-phosphosulfate (APS) and diphosphate, the first enzymatic step in sulfur assimilation pathway. APS synthesis involves the formation of a high-energy phosphoric-sulfuric acid anhydride bond driven by GTP hydrolysis by CysN coupled to ATP hydrolysis by CysD. This is Sulfate adenylyltransferase subunit 2 from Vibrio atlanticus (strain LGP32) (Vibrio splendidus (strain Mel32)).